The primary structure comprises 379 residues: 4-hydroxy-3-methylbut-2-enyl diphosphate reductase (379 aa).

A [4Fe-4S] cluster-binding site is contributed by Cys39. His69 contributes to the (2E)-4-hydroxy-3-methylbut-2-enyl diphosphate binding site. His69 provides a ligand contact to dimethylallyl diphosphate. Isopentenyl diphosphate is bound at residue His69. Cys130 contacts [4Fe-4S] cluster. His158 is a (2E)-4-hydroxy-3-methylbut-2-enyl diphosphate binding site. Dimethylallyl diphosphate is bound at residue His158. Isopentenyl diphosphate is bound at residue His158. The active-site Proton donor is the Glu160. Thr223 lines the (2E)-4-hydroxy-3-methylbut-2-enyl diphosphate pocket. [4Fe-4S] cluster is bound at residue Cys261. Residues Ser290, Ser291, Asn292, and Ser352 each contribute to the (2E)-4-hydroxy-3-methylbut-2-enyl diphosphate site. Dimethylallyl diphosphate contacts are provided by Ser290, Ser291, Asn292, and Ser352. Isopentenyl diphosphate contacts are provided by Ser290, Ser291, Asn292, and Ser352.

Belongs to the IspH family. [4Fe-4S] cluster serves as cofactor.

The catalysed reaction is isopentenyl diphosphate + 2 oxidized [2Fe-2S]-[ferredoxin] + H2O = (2E)-4-hydroxy-3-methylbut-2-enyl diphosphate + 2 reduced [2Fe-2S]-[ferredoxin] + 2 H(+). The enzyme catalyses dimethylallyl diphosphate + 2 oxidized [2Fe-2S]-[ferredoxin] + H2O = (2E)-4-hydroxy-3-methylbut-2-enyl diphosphate + 2 reduced [2Fe-2S]-[ferredoxin] + 2 H(+). Its pathway is isoprenoid biosynthesis; dimethylallyl diphosphate biosynthesis; dimethylallyl diphosphate from (2E)-4-hydroxy-3-methylbutenyl diphosphate: step 1/1. It participates in isoprenoid biosynthesis; isopentenyl diphosphate biosynthesis via DXP pathway; isopentenyl diphosphate from 1-deoxy-D-xylulose 5-phosphate: step 6/6. Functionally, catalyzes the conversion of 1-hydroxy-2-methyl-2-(E)-butenyl 4-diphosphate (HMBPP) into a mixture of isopentenyl diphosphate (IPP) and dimethylallyl diphosphate (DMAPP). Acts in the terminal step of the DOXP/MEP pathway for isoprenoid precursor biosynthesis. The protein is 4-hydroxy-3-methylbut-2-enyl diphosphate reductase of Synechocystis sp. (strain ATCC 27184 / PCC 6803 / Kazusa).